The sequence spans 274 residues: HMP-PP phosphatase (274 aa).

Asp-8 serves as the catalytic Nucleophile. The Mg(2+) site is built by Asp-8, Asp-10, and Asp-213.

The protein belongs to the HAD-like hydrolase superfamily. Cof family. The cofactor is Mg(2+).

It carries out the reaction 4-amino-2-methyl-5-(diphosphooxymethyl)pyrimidine + H2O = 4-amino-2-methyl-5-(phosphooxymethyl)pyrimidine + phosphate + H(+). Catalyzes the hydrolysis of 4-amino-2-methyl-5-hydroxymethylpyrimidine pyrophosphate (HMP-PP) to 4-amino-2-methyl-5-hydroxymethylpyrimidine phosphate (HMP-P). The polypeptide is HMP-PP phosphatase (Serratia proteamaculans (strain 568)).